The sequence spans 310 residues: Olfactory receptor 8B8 (310 aa).

Topologically, residues 1–27 (MATENASVPEFILAGLTDQPGLRMPLF) are extracellular. Asparagine 5 carries an N-linked (GlcNAc...) asparagine glycan. A helical membrane pass occupies residues 28–48 (FLFLGFYMVTMVGNLGLITLI). Residues 49 to 55 (GLNSHLH) lie on the Cytoplasmic side of the membrane. The helical transmembrane segment at 56–76 (TPMYFFLFNLSLIDFCYSTVI) threads the bilayer. Residues 77-98 (TPKMLVSFVSKKNIISYSGCMT) are Extracellular-facing. Cysteines 96 and 188 form a disulfide. Residues 99–119 (QLFFFLFFVVSESFILSAMAY) form a helical membrane-spanning segment. The Cytoplasmic segment spans residues 120 to 140 (DRYVAICNPLMYTVTMSPQVC). The helical transmembrane segment at 141–161 (LLLLLGVYVMGFAGAMAHTAF) threads the bilayer. At 162–195 (MVKLTFCADKLVNHYMCDILPLLERSCTSTYVNE) the chain is on the extracellular side. Residues 196 to 216 (LVVFIVVGIDIGVPTVTIFIS) form a helical membrane-spanning segment. At 217-238 (YALILSSILRISSTEGRSKAFS) the chain is on the cytoplasmic side. The helical transmembrane segment at 239–259 (TCSSHIIAVSLFFGSGAFMYL) threads the bilayer. The Extracellular portion of the chain corresponds to 260-270 (KPSSLLPMNQG). A helical transmembrane segment spans residues 271-291 (KVSSLFYTIVVPMLNPLIYSL). The Cytoplasmic portion of the chain corresponds to 292–310 (RNKDVKVALRKTLSRSSFS).

It belongs to the G-protein coupled receptor 1 family.

Its subcellular location is the cell membrane. In terms of biological role, odorant receptor. This is Olfactory receptor 8B8 from Mus musculus (Mouse).